An 88-amino-acid chain; its full sequence is DNA-directed RNA polymerase subunit omega (88 aa).

The protein belongs to the RNA polymerase subunit omega family. The RNAP catalytic core consists of 2 alpha, 1 beta, 1 beta' and 1 omega subunit. When a sigma factor is associated with the core the holoenzyme is formed, which can initiate transcription.

It carries out the reaction RNA(n) + a ribonucleoside 5'-triphosphate = RNA(n+1) + diphosphate. Functionally, promotes RNA polymerase assembly. Latches the N- and C-terminal regions of the beta' subunit thereby facilitating its interaction with the beta and alpha subunits. This chain is DNA-directed RNA polymerase subunit omega, found in Thermobifida fusca (strain YX).